Consider the following 435-residue polypeptide: Asparagine--tRNA ligase (435 aa).

Belongs to the class-II aminoacyl-tRNA synthetase family. As to quaternary structure, homodimer.

The protein localises to the cytoplasm. The enzyme catalyses tRNA(Asn) + L-asparagine + ATP = L-asparaginyl-tRNA(Asn) + AMP + diphosphate + H(+). This Leptospira borgpetersenii serovar Hardjo-bovis (strain JB197) protein is Asparagine--tRNA ligase.